Reading from the N-terminus, the 550-residue chain is CTP synthase (550 aa).

Residues 1-270 (MTKYVFVTGG…DRIICEELKL (270 aa)) are amidoligase domain. A CTP-binding site is contributed by S13. A UTP-binding site is contributed by S13. Residues 14–19 (SLGKGI) and D71 contribute to the ATP site. Mg(2+) is bound by residues D71 and E144. CTP contacts are provided by residues 151 to 153 (DIE), 191 to 196 (KTKPTQ), and K227. UTP is bound by residues 191-196 (KTKPTQ) and K227. In terms of domain architecture, Glutamine amidotransferase type-1 spans 295–547 (TIGMVGKYVD…VEAALANKQA (253 aa)). G356 is a binding site for L-glutamine. The active-site Nucleophile; for glutamine hydrolysis is C383. L-glutamine-binding positions include 384-387 (LGMQ), E407, and R473. Catalysis depends on residues H520 and E522.

The protein belongs to the CTP synthase family. As to quaternary structure, homotetramer.

It carries out the reaction UTP + L-glutamine + ATP + H2O = CTP + L-glutamate + ADP + phosphate + 2 H(+). The catalysed reaction is L-glutamine + H2O = L-glutamate + NH4(+). The enzyme catalyses UTP + NH4(+) + ATP = CTP + ADP + phosphate + 2 H(+). The protein operates within pyrimidine metabolism; CTP biosynthesis via de novo pathway; CTP from UDP: step 2/2. With respect to regulation, allosterically activated by GTP, when glutamine is the substrate; GTP has no effect on the reaction when ammonia is the substrate. The allosteric effector GTP functions by stabilizing the protein conformation that binds the tetrahedral intermediate(s) formed during glutamine hydrolysis. Inhibited by the product CTP, via allosteric rather than competitive inhibition. Functionally, catalyzes the ATP-dependent amination of UTP to CTP with either L-glutamine or ammonia as the source of nitrogen. Regulates intracellular CTP levels through interactions with the four ribonucleotide triphosphates. This Burkholderia lata (strain ATCC 17760 / DSM 23089 / LMG 22485 / NCIMB 9086 / R18194 / 383) protein is CTP synthase.